The sequence spans 415 residues: UV excision repair protein RAD23 homolog B (415 aa).

The region spanning 1-79 (MQVTLKTLQQ…VVVMVTKPKA (79 aa)) is the Ubiquitin-like domain. The segment at 80-175 (VTSAVPATTQ…STPGDSSRSN (96 aa)) is disordered. The span at 84 to 143 (VPATTQQSSSPSTTTVSSSPAAAVAQAPAPTPALAPTSTPASTTPASTTASSEPAPTGAT) shows a compositional bias: low complexity. Thr-155 carries the phosphothreonine modification. Residues Ser-160 and Ser-174 each carry the phosphoserine modification. At Thr-186 the chain carries Phosphothreonine. The region spanning 188-228 (QSYENMVTEIMSMGYEREQVIAALRASFNNPDRAVEYLLMG) is the UBA 1 domain. A Phosphoserine modification is found at Ser-199. Position 202 is a phosphotyrosine (Tyr-202). Residues 274–317 (HPLEFLRNQPQFQQMRQIIQQNPSLLPALLQQIGRENPQLLQQI) enclose the STI1 domain. A disordered region spans residues 334–355 (EAGGQGGGGGGGGGGGGGGGGI). Gly residues predominate over residues 336–355 (GGQGGGGGGGGGGGGGGGGI). One can recognise a UBA 2 domain in the interval 370–410 (PQEKEAIERLKALGFPEGLVIQAYFACEKNENLAANFLLQQ).

This sequence belongs to the RAD23 family. As to quaternary structure, component of the XPC complex composed of XPC, RAD23B and CETN2. Interacts with NGLY1 and PSMC1. Interacts with ATXN3. Interacts with AMFR. Interacts with VCP; the interaction is indirect and mediated by NGLY1.

It localises to the nucleus. The protein resides in the cytoplasm. Its function is as follows. Multiubiquitin chain receptor involved in modulation of proteasomal degradation. Binds to polyubiquitin chains. Proposed to be capable to bind simultaneously to the 26S proteasome and to polyubiquitinated substrates and to deliver ubiquitinated proteins to the proteasome. May play a role in endoplasmic reticulum-associated degradation (ERAD) of misfolded glycoproteins by association with PNGase and delivering deglycosylated proteins to the proteasome. Functionally, involved in global genome nucleotide excision repair (GG-NER) by acting as component of the XPC complex. Cooperatively with Cetn2 appears to stabilize Xpc. May protect Xpc from proteasomal degradation. In terms of biological role, the XPC complex is proposed to represent the first factor bound at the sites of DNA damage and together with other core recognition factors, Xpa, RPA and the TFIIH complex, is part of the pre-incision (or initial recognition) complex. The XPC complex recognizes a wide spectrum of damaged DNA characterized by distortions of the DNA helix such as single-stranded loops, mismatched bubbles or single-stranded overhangs. The orientation of XPC complex binding appears to be crucial for inducing a productive NER. XPC complex is proposed to recognize and to interact with unpaired bases on the undamaged DNA strand which is followed by recruitment of the TFIIH complex and subsequent scanning for lesions in the opposite strand in a 5'-to-3' direction by the NER machinery. Cyclobutane pyrimidine dimers (CPDs) which are formed upon UV-induced DNA damage esacpe detection by the XPC complex due to a low degree of structural perurbation. Instead they are detected by the UV-DDB complex which in turn recruits and cooperates with the XPC complex in the respective DNA repair. In vitro, the XPC:RAD23B dimer is sufficient to initiate NER; it preferentially binds to cisplatin and UV-damaged double-stranded DNA and also binds to a variety of chemically and structurally diverse DNA adducts. XPC:RAD23B contacts DNA both 5' and 3' of a cisplatin lesion with a preference for the 5' side. Xpc:Rad22b induces a bend in DNA upon binding. Xpc:Rad23b stimulates the activity of DNA glycosylases Tdg and Smug1. The sequence is that of UV excision repair protein RAD23 homolog B (Rad23b) from Rattus norvegicus (Rat).